Reading from the N-terminus, the 344-residue chain is Molybdate/tungstate import ATP-binding protein WtpC (344 aa).

The 230-residue stretch at 2 to 231 (LRVESVSKDY…PVDEGVARFL (230 aa)) folds into the ABC transporter domain. 33–40 (GPSGAGKT) contributes to the ATP binding site. The Mop domain maps to 280–344 (KTSARNEFRA…SFKTSAIKVF (65 aa)).

It belongs to the ABC transporter superfamily. Sulfate/tungstate importer (TC 3.A.1.6) family. In terms of assembly, the complex is composed of two ATP-binding proteins (WtpC), two transmembrane proteins (WtpB) and a solute-binding protein (WtpA).

The protein localises to the cell membrane. It carries out the reaction tungstate(in) + ATP + H2O = tungstate(out) + ADP + phosphate + H(+). In terms of biological role, part of the ABC transporter complex WtpABC involved in molybdate/tungstate import. Responsible for energy coupling to the transport system. The chain is Molybdate/tungstate import ATP-binding protein WtpC (wtpC) from Pyrococcus abyssi (strain GE5 / Orsay).